A 457-amino-acid polypeptide reads, in one-letter code: MGQDGSPAHKRPSGSGGGLPTTTLTNGGGRGGRGGLLPRGRQMQKTFNNIKITILCGFVTILVLRGTIGVGNLGSSSADAVNQNIIEETNRILAEIRSDSDPTDLDEPQEGDMNPNATYVLGPKITDWDSQRKVWLNQNPEFPSTVNGKARILLLTGSPPKPCDNPIGDHYLLKSVKNKIDYCRLHGIEIVYNMAHLDKELAGYWAKLPMIRRLMLSHPEVEWIWWMDSDALFTDILFQIPLARYQKHNLVIHGYPDLLFDQKSWIALNTGSFLLRNCQWSLDLLDAWAPMGPKGPIRDEAGKVLTAYLKGRPAFEADDQSALIYLLLSQKDTWMEKVFVENQYYLHGFWEGLVDRYEEMIEKYHPGLGDERWPFVTHFVGCKPCGSYADYAVERCLKSMERAFNFADNQVLKLYGFSHRGLLSPKIKRIRNETVSPLEFVDKFDIRRTPVETKPQN.

The segment at 1–40 (MGQDGSPAHKRPSGSGGGLPTTTLTNGGGRGGRGGLLPRG) is disordered. Residues 1–51 (MGQDGSPAHKRPSGSGGGLPTTTLTNGGGRGGRGGLLPRGRQMQKTFNNIK) are Cytoplasmic-facing. A compositionally biased stretch (gly residues) spans 26-37 (NGGGRGGRGGLL). A helical; Signal-anchor for type II membrane protein membrane pass occupies residues 52-72 (ITILCGFVTILVLRGTIGVGN). Topologically, residues 73 to 457 (LGSSSADAVN…RTPVETKPQN (385 aa)) are lumenal. The tract at residues 97–116 (RSDSDPTDLDEPQEGDMNPN) is disordered. Over residues 101–110 (DPTDLDEPQE) the composition is skewed to acidic residues. N-linked (GlcNAc...) asparagine glycosylation is found at asparagine 116 and asparagine 432.

The protein belongs to the glycosyltransferase 34 family. As to quaternary structure, interacts with XXT2 and CSLC4. Interacts with FUT1 and XLT2. Highly expressed in roots, stems and cauline leaves, and at lower levels in rosette leaves, flowers and siliques.

The protein resides in the golgi apparatus membrane. It carries out the reaction Transfers an alpha-D-xylosyl residue from UDP-D-xylose to a glucose residue in xyloglucan, forming an alpha-(1-&gt;6)-D-xylosyl-D-glucose linkage.. Its function is as follows. Probable xyloglucan xylosyltransferase involved in the biosynthesis of xyloglucan in roots. May act in association with XXT1 and XXT2. Associates with other xyloglucan-synthesizing enzymes to form multiprotein complexes for xyloglucan synthesis in the Golgi. The chain is Probable xyloglucan 6-xylosyltransferase 5 from Arabidopsis thaliana (Mouse-ear cress).